Reading from the N-terminus, the 555-residue chain is MKVCQRKTIDTEKMSSVGDTACADLSEKKDNEKKKRSRVKQLLSDVKKQVEFWFGDVNLHKDRFMKSIIEQSRDGYIDIAVLTTFNRMKNLTADVKLIARALKNSTIVEVNDEGTRIRRKEPLGETPKDVDSRTVYVELLPKTVTHIWLERVFSKCGHVVYISIPRYKSTRHSKGFAFVEFETQEQAQKAVEMLNNPPEDAPRKPGIFPKTCRKKAVPFDAVTQDNDEDGKKKKTELKNSTSEETGSNNMDQDGMLESTVTSEPNLATLTSTVSKKAKKKRLRSQSFEASSGEDQFEMSSKMRKVEEEKSELKDLSSENKDEELNSLKKKDDSVLKAKRKRKKKLKERLKVGEEVIPLRVLSKKEWLDLKQEYLTLQKRCMAHLKQSVFQINQKPTNYHIVKLKEDDTNAFYKDTPKKELTSGPEFLSGVIVKISYNQPLPSKRCIKDMLSELSPVAYVDLLDGDTEGHVRFKSSEDAQKVIKARFEFQKKYNWNLELLSGDHERRYWQKILVDRQAKLNTPREKKRGTEKLISKAEKIIIAKAKEASNHIRFDD.

Residues 36-127 (RSRVKQLLSD…RRKEPLGETP (92 aa)) enclose the HTH La-type RNA-binding domain. The RRM domain maps to 133–211 (RTVYVELLPK…PRKPGIFPKT (79 aa)). The disordered stretch occupies residues 218–327 (PFDAVTQDND…ENKDEELNSL (110 aa)). 3 stretches are compositionally biased toward polar residues: residues 238-251 (KNSTSEETGSNNMD), 258-274 (STVTSEPNLATLTSTVS), and 284-293 (SQSFEASSGE). Residues 295 to 356 (QFEMSSKMRK…ERLKVGEEVI (62 aa)) are a coiled coil. Over residues 303–327 (RKVEEEKSELKDLSSENKDEELNSL) the composition is skewed to basic and acidic residues. Residues 425 to 538 (EFLSGVIVKI…TEKLISKAEK (114 aa)) form the xRRM domain.

This sequence belongs to the LARP7 family. In terms of assembly, core component of the 7SK RNP complex. Associates with box C/D small nucleolar ribonucleoprotein (snoRNP) complexes.

The protein resides in the nucleus. Its subcellular location is the nucleoplasm. RNA-binding protein that specifically binds distinct small nuclear RNA (snRNAs) and regulates their processing and function. Specifically binds the 7SK snRNA (7SK RNA) and acts as a core component of the 7SK ribonucleoprotein (RNP) complex, thereby acting as a negative regulator of transcription elongation by RNA polymerase II. The 7SK RNP complex sequesters the positive transcription elongation factor b (P-TEFb) in a large inactive 7SK RNP complex preventing RNA polymerase II phosphorylation and subsequent transcriptional elongation. The 7SK RNP complex also promotes snRNA gene transcription by RNA polymerase II via interaction with the little elongation complex (LEC). LARP7 specifically binds to the highly conserved 3'-terminal U-rich stretch of 7SK RNA; on stimulation, remains associated with 7SK RNA, whereas P-TEFb is released from the complex. LARP7 also acts as a regulator of mRNA splicing fidelity by promoting U6 snRNA processing. Specifically binds U6 snRNAs and associates with a subset of box C/D RNP complexes: promotes U6 snRNA 2'-O-methylation by facilitating U6 snRNA loading into box C/D RNP complexes. U6 snRNA 2'-O-methylation is required for mRNA splicing fidelity. The chain is La-related protein 7 from Danio rerio (Zebrafish).